The primary structure comprises 417 residues: Serine hydroxymethyltransferase (417 aa).

Residues Leu121 and 125–127 (GHL) contribute to the (6S)-5,6,7,8-tetrahydrofolate site. N6-(pyridoxal phosphate)lysine is present on Lys229. 355–357 (SPF) is a (6S)-5,6,7,8-tetrahydrofolate binding site.

It belongs to the SHMT family. As to quaternary structure, homodimer. It depends on pyridoxal 5'-phosphate as a cofactor.

Its subcellular location is the cytoplasm. It carries out the reaction (6R)-5,10-methylene-5,6,7,8-tetrahydrofolate + glycine + H2O = (6S)-5,6,7,8-tetrahydrofolate + L-serine. The protein operates within one-carbon metabolism; tetrahydrofolate interconversion. Its pathway is amino-acid biosynthesis; glycine biosynthesis; glycine from L-serine: step 1/1. Functionally, catalyzes the reversible interconversion of serine and glycine with tetrahydrofolate (THF) serving as the one-carbon carrier. This reaction serves as the major source of one-carbon groups required for the biosynthesis of purines, thymidylate, methionine, and other important biomolecules. Also exhibits THF-independent aldolase activity toward beta-hydroxyamino acids, producing glycine and aldehydes, via a retro-aldol mechanism. The polypeptide is Serine hydroxymethyltransferase (Salmonella paratyphi C (strain RKS4594)).